The primary structure comprises 107 residues: Phosphoribosyl-ATP pyrophosphatase (107 aa).

The protein belongs to the PRA-PH family.

It localises to the cytoplasm. The catalysed reaction is 1-(5-phospho-beta-D-ribosyl)-ATP + H2O = 1-(5-phospho-beta-D-ribosyl)-5'-AMP + diphosphate + H(+). Its pathway is amino-acid biosynthesis; L-histidine biosynthesis; L-histidine from 5-phospho-alpha-D-ribose 1-diphosphate: step 2/9. This chain is Phosphoribosyl-ATP pyrophosphatase, found in Zymomonas mobilis subsp. mobilis (strain ATCC 31821 / ZM4 / CP4).